The primary structure comprises 103 residues: NADH-quinone oxidoreductase subunit K (103 aa).

3 consecutive transmembrane segments (helical) span residues 6–26 (IEYY…GFLL), 30–50 (LLVL…TLVA), and 66–86 (FFVI…VLAF).

This sequence belongs to the complex I subunit 4L family. As to quaternary structure, NDH-1 is composed of 14 different subunits. Subunits NuoA, H, J, K, L, M, N constitute the membrane sector of the complex.

It is found in the cell inner membrane. It carries out the reaction a quinone + NADH + 5 H(+)(in) = a quinol + NAD(+) + 4 H(+)(out). In terms of biological role, NDH-1 shuttles electrons from NADH, via FMN and iron-sulfur (Fe-S) centers, to quinones in the respiratory chain. The immediate electron acceptor for the enzyme in this species is believed to be ubiquinone. Couples the redox reaction to proton translocation (for every two electrons transferred, four hydrogen ions are translocated across the cytoplasmic membrane), and thus conserves the redox energy in a proton gradient. The chain is NADH-quinone oxidoreductase subunit K from Sorangium cellulosum (strain So ce56) (Polyangium cellulosum (strain So ce56)).